Reading from the N-terminus, the 708-residue chain is G-box-binding factor (708 aa).

Disordered regions lie at residues 1–29 (MLSTHHHQGNSSSSSSSSSPSQTIGGSDL) and 123–339 (QQAQ…QTIP). 3 stretches are compositionally biased toward low complexity: residues 11–21 (SSSSSSSSSPS), 123–219 (QQAQ…QHHQ), and 227–316 (SQPQ…SPST). Over residues 324-333 (ETSNSEKKDS) the composition is skewed to basic and acidic residues. A run of 2 repeats spans residues 339 to 368 (PKCTRCNEAASWKHDKRRWWCKECKKAFTP) and 481 to 510 (PPCPLCRGISSWKHDKKRYFCKECKKPFTP). The interval 511–604 (VGAGLSPSSS…PTYSPNPSLP (94 aa)) is disordered. The segment covering 516–590 (SPSSSPSSPK…SSISQSPLQL (75 aa)) has biased composition (low complexity). Over residues 591–600 (NYQTPTYSPN) the composition is skewed to polar residues.

The protein localises to the nucleus. CAMP-responsive transcriptional activator regulating late gene expression. Essential component of the developmental switch between early and late development. Binds to a number of CA/GT-rich gene regulatory elements. The sequence is that of G-box-binding factor (gbfA) from Dictyostelium discoideum (Social amoeba).